We begin with the raw amino-acid sequence, 416 residues long: 3-isopropylmalate dehydratase large subunit 2 (416 aa).

[4Fe-4S] cluster contacts are provided by Cys-296, Cys-356, and Cys-359.

It belongs to the aconitase/IPM isomerase family. LeuC type 2 subfamily. As to quaternary structure, heterodimer of LeuC and LeuD. The cofactor is [4Fe-4S] cluster.

It carries out the reaction (2R,3S)-3-isopropylmalate = (2S)-2-isopropylmalate. Its pathway is amino-acid biosynthesis; L-leucine biosynthesis; L-leucine from 3-methyl-2-oxobutanoate: step 2/4. In terms of biological role, catalyzes the isomerization between 2-isopropylmalate and 3-isopropylmalate, via the formation of 2-isopropylmaleate. This chain is 3-isopropylmalate dehydratase large subunit 2, found in Archaeoglobus fulgidus (strain ATCC 49558 / DSM 4304 / JCM 9628 / NBRC 100126 / VC-16).